Consider the following 185-residue polypeptide: Ribosome-recycling factor (185 aa).

This sequence belongs to the RRF family.

It localises to the cytoplasm. In terms of biological role, responsible for the release of ribosomes from messenger RNA at the termination of protein biosynthesis. May increase the efficiency of translation by recycling ribosomes from one round of translation to another. The polypeptide is Ribosome-recycling factor (Clostridium novyi (strain NT)).